The following is a 505-amino-acid chain: Probable cytochrome P450 28a5 (505 aa).

Cysteine 450 contributes to the heme binding site.

This sequence belongs to the cytochrome P450 family. The cofactor is heme.

Its subcellular location is the endoplasmic reticulum membrane. It localises to the microsome membrane. Functionally, may be involved in the metabolism of insect hormones and in the breakdown of synthetic insecticides. The sequence is that of Probable cytochrome P450 28a5 (Cyp28a5) from Drosophila melanogaster (Fruit fly).